Here is a 655-residue protein sequence, read N- to C-terminus: UvrABC system protein C (655 aa).

The GIY-YIG domain maps to 16 to 95; sequence TDPGVYRFRD…IKEFAPRYNL (80 aa). The UVR domain occupies 207–242; sequence KRFIGTLEKQMAEAVAELDYERAARLRDDVIALRKV.

Belongs to the UvrC family. As to quaternary structure, interacts with UvrB in an incision complex.

Its subcellular location is the cytoplasm. Its function is as follows. The UvrABC repair system catalyzes the recognition and processing of DNA lesions. UvrC both incises the 5' and 3' sides of the lesion. The N-terminal half is responsible for the 3' incision and the C-terminal half is responsible for the 5' incision. In Renibacterium salmoninarum (strain ATCC 33209 / DSM 20767 / JCM 11484 / NBRC 15589 / NCIMB 2235), this protein is UvrABC system protein C.